Here is a 328-residue protein sequence, read N- to C-terminus: Alanine racemase (328 aa).

The active-site Proton acceptor; specific for D-alanine is lysine 33. N6-(pyridoxal phosphate)lysine is present on lysine 33. Position 118 (arginine 118) interacts with substrate. The active-site Proton acceptor; specific for L-alanine is tyrosine 237. Methionine 283 serves as a coordination point for substrate.

It belongs to the alanine racemase family. Pyridoxal 5'-phosphate serves as cofactor.

It catalyses the reaction L-alanine = D-alanine. Its pathway is amino-acid biosynthesis; D-alanine biosynthesis; D-alanine from L-alanine: step 1/1. Its function is as follows. Catalyzes the interconversion of L-alanine and D-alanine. May also act on other amino acids. In Campylobacter jejuni subsp. jejuni serotype O:23/36 (strain 81-176), this protein is Alanine racemase (alr).